A 126-amino-acid chain; its full sequence is Arginine decarboxylase proenzyme (126 aa).

S74 functions as the Schiff-base intermediate with substrate; via pyruvic acid in the catalytic mechanism. Pyruvic acid (Ser); by autocatalysis is present on S74. The active-site Proton acceptor; for processing activity is H79. Catalysis depends on C94, which acts as the Proton donor; for catalytic activity.

It belongs to the prokaryotic AdoMetDC family. Type 1 subfamily. As to quaternary structure, heterooctamer of four alpha and four beta chains arranged as a tetramer of alpha/beta heterodimers. Pyruvate serves as cofactor. Is synthesized initially as an inactive proenzyme. Formation of the active enzyme involves a self-maturation process in which the active site pyruvoyl group is generated from an internal serine residue via an autocatalytic post-translational modification. Two non-identical subunits are generated from the proenzyme in this reaction, and the pyruvate is formed at the N-terminus of the alpha chain, which is derived from the carboxyl end of the proenzyme. The post-translation cleavage follows an unusual pathway, termed non-hydrolytic serinolysis, in which the side chain hydroxyl group of the serine supplies its oxygen atom to form the C-terminus of the beta chain, while the remainder of the serine residue undergoes an oxidative deamination to produce ammonia and the pyruvoyl group blocking the N-terminus of the alpha chain.

It carries out the reaction L-arginine + H(+) = agmatine + CO2. It functions in the pathway amine and polyamine biosynthesis; agmatine biosynthesis; agmatine from L-arginine: step 1/1. Specifically catalyzes the decarboxylation of L-arginine to agmatine. Has no S-adenosylmethionine decarboxylase (AdoMetDC) activity. The polypeptide is Arginine decarboxylase proenzyme (Pyrobaculum calidifontis (strain DSM 21063 / JCM 11548 / VA1)).